The primary structure comprises 291 residues: MEMO1 family protein TON_0132 (291 aa).

It belongs to the MEMO1 family.

This chain is MEMO1 family protein TON_0132, found in Thermococcus onnurineus (strain NA1).